The sequence spans 362 residues: Putative integrase ORF3 (362 aa).

The Integrase catalytic domain maps to 179 to 359; the sequence is YEVKEIGLLQ…TPFNFLNSLS (181 aa). Residues D190 and D256 each coordinate Mg(2+).

This sequence belongs to the plectrovirus integrase ORF3 family.

In terms of biological role, this protein may encode an integrase, which is necessary for integration of the viral DNA into host genome. The chain is Putative integrase ORF3 from Spiroplasma melliferum (SpV1).